A 580-amino-acid polypeptide reads, in one-letter code: Mitogen-activated protein kinase 12 (580 aa).

The interval Arg18–Leu38 is disordered. A compositionally biased stretch (polar residues) spans Ala20 to Ala29. Residues Tyr87–Phe378 enclose the Protein kinase domain. ATP contacts are provided by residues Ile93–Val101 and Lys116. Asp213 functions as the Proton acceptor in the catalytic mechanism. Thr249 carries the phosphothreonine modification. The TXY motif lies at Thr249–Tyr251. A Phosphotyrosine modification is found at Tyr251. Positions Ala325–Val506 are required for kinase activity and nuclear localization. A disordered region spans residues Tyr458–Ser580. A compositionally biased stretch (polar residues) spans Ala502 to Ala543. Residues Glu554–Gly566 show a composition bias toward acidic residues.

Belongs to the protein kinase superfamily. CMGC Ser/Thr protein kinase family. MAP kinase subfamily. As to quaternary structure, interacts with EREBP1. In terms of processing, dually phosphorylated on Thr-249 and Tyr-251, which activates the enzyme. Phosphorylated on tyrosine residue.

The protein localises to the cytoplasm. The protein resides in the nucleus. The catalysed reaction is L-seryl-[protein] + ATP = O-phospho-L-seryl-[protein] + ADP + H(+). It carries out the reaction L-threonyl-[protein] + ATP = O-phospho-L-threonyl-[protein] + ADP + H(+). Its activity is regulated as follows. Activated by threonine and tyrosine phosphorylation. Activated in response to hydrogen peroxide, salicylic acid, jasmonic acid, ethylene, fungal elicitor and infection with rice blast fungus (M.grisea). May be involved in defense signaling pathway. Phosphorylates EREBP1 transcriptional activator in vitro. Enhances DNA-binding activity of EREBP1 to the GCC box element of pathogenesis-related (PR) gene promoters. The sequence is that of Mitogen-activated protein kinase 12 (MPK12) from Oryza sativa subsp. japonica (Rice).